The chain runs to 26 residues: Citropin-2.1.3 (26 aa).

Expressed by the dorsal and submental skin glands.

The protein localises to the secreted. The chain is Citropin-2.1.3 from Ranoidea citropa (Australian Blue Mountains tree frog).